Reading from the N-terminus, the 179-residue chain is Tetratricopeptide repeat protein 36 (179 aa).

TPR repeat units follow at residues 43-76, 77-110, and 115-148; these read SSQLEREAVRLAESMNVTDAIEKFTEAIQVCPLN, PSAYNNRAQAYRLQNSPEKALEDLNESLRLAGPK, and CQAYVQRASIYRLQGDDEKARADFAAAAELGSSF.

Belongs to the TTC36 family.

This is Tetratricopeptide repeat protein 36 from Caenorhabditis briggsae.